The sequence spans 175 residues: Inorganic pyrophosphatase (175 aa).

The substrate site is built by Lys30, Arg44, and Tyr56. Mg(2+) is bound by residues Asp66, Asp71, and Asp103. Position 142 (Tyr142) interacts with substrate.

This sequence belongs to the PPase family. As to quaternary structure, homohexamer. Mg(2+) serves as cofactor.

It is found in the cytoplasm. The catalysed reaction is diphosphate + H2O = 2 phosphate + H(+). Its function is as follows. Catalyzes the hydrolysis of inorganic pyrophosphate (PPi) forming two phosphate ions. The sequence is that of Inorganic pyrophosphatase from Haemophilus ducreyi (strain 35000HP / ATCC 700724).